The chain runs to 180 residues: ADP-ribosylation factor-like protein 1 (180 aa).

The N-myristoyl glycine moiety is linked to residue Gly-2. GTP is bound by residues Gly-23–Thr-30, Asp-66–Gln-70, and Asn-125–Asp-128.

It belongs to the small GTPase superfamily. Arf family. As to expression, expressed in neuronal cells. Expression in hypodermal tissues is absent.

Its subcellular location is the golgi apparatus. The protein localises to the cytoplasm. It localises to the cytoplasmic granule. Its function is as follows. GTP-binding protein that may be involved in protein trafficking; may modulate vesicle budding and uncoating within the Golgi apparatus. Plays a role in male tail tip morphogenesis. This Caenorhabditis elegans protein is ADP-ribosylation factor-like protein 1.